The following is a 91-amino-acid chain: Transcription factor ILI7 (91 aa).

The region spanning 4–58 is the bHLH domain; it reads RSRSRASSAARITDEQIGDLVSKLQALLPEARLRSNDRVPSARVLQETCSYIRSL.

This sequence belongs to the bHLH protein family.

Functionally, atypical and probable non DNA-binding bHLH transcription factor that integrates multiple signaling pathways to regulate cell elongation and plant development. The chain is Transcription factor ILI7 (ILI7) from Oryza sativa subsp. indica (Rice).